The following is a 908-amino-acid chain: MTDSQDKVNGGSKNTFLSRVFGVHSSAVENSLDAAEMSHITMPTEQDFSNYAEDEGNVRLIESDQEPSSSNEDSNDEEPLIQQPQSIRFDTASDGMATIQSESEPDEGGTEEDEVHLEEEDFSDQDLASSVSKYGQPSSSEDEEPLSNRDSNRGSDETIPFIGRQRLNLGGKNPITGATKSTKNPSESRVFERLLGNSPAKMFRNNGRPNNLEESFLFRKPSVAEQSGPGKSTHFNLKPPPIFNNISTLTSTSKNSLSSLSPKERALWKWANIENLDTFLQQVYEYYLGNGFYCIITEKVIHLATILFVVFISTYMGHCIDYSRLSSSHTFEEIHIEQCYKTQISPTAKVFLWIFYAFIGLKVLQLYFDVKALKDIRNFYNYLLSISDKDLQTIPWQSVIQQLVLLKDQNAITANATEVKAKNRLSAHDVANRIMRKENFVIALYDNNILDLSLPVPLLRTCALTKTLEWNINLCILGFAFNEKGYLKQAFLRESQREYLGEELKKRFVLAGFLNIILSPFLVTYFVLLNFFRYFNEYKTSPGSIGSRQYTPIAEWKFREYNELYHIFQKRMRLSMIIADNYVNQFPNTLLSLTLSFIQFVSGSFVAILGILTIFDPDNFLNFEITPDRTVLFYMTVFGTLWAVCHSSINDEYTVLKPEETLEELVSYTHYAPKEWKGKYHTEDIKNEFCRLYNLRITLLLRELVSIIITPFILWFSLPKNSERIIDFFRECTVYEEGLGYVCKYAMFEATKIDKGTKAKKQTKRMFSQAEQDDSETESDEGVNKMLQSYMYFVDDYKNAGNAVGKNQLPASPIEPSYHPYSSTKDYSWKTQFALGKNSNRKRNLNRSRVKRFPDRSSDLELGSLSGSLINKSTLFKDDIADNADELKAGNGVMGLLNQYYKKSDRNR.

Over 1-299 the chain is Cytoplasmic; it reads MTDSQDKVNG…NGFYCIITEK (299 aa). Residues 37–188 are disordered; that stretch reads MSHITMPTEQ…TKSTKNPSES (152 aa). Residues 103–124 show a composition bias toward acidic residues; the sequence is SEPDEGGTEEDEVHLEEEDFSD. A compositionally biased stretch (polar residues) spans 126 to 139; sequence DLASSVSKYGQPSS. Positions 146–156 are enriched in basic and acidic residues; that stretch reads LSNRDSNRGSD. Residues 176 to 187 are compositionally biased toward polar residues; sequence TGATKSTKNPSE. Residues 300–320 form a helical membrane-spanning segment; it reads VIHLATILFVVFISTYMGHCI. At 321–349 the chain is on the lumenal side; it reads DYSRLSSSHTFEEIHIEQCYKTQISPTAK. Residues 350-370 form a helical membrane-spanning segment; it reads VFLWIFYAFIGLKVLQLYFDV. Over 371-507 the chain is Cytoplasmic; sequence KALKDIRNFY…EYLGEELKKR (137 aa). An intramembrane segment occupies 508–528; sequence FVLAGFLNIILSPFLVTYFVL. The Cytoplasmic segment spans residues 529–594; the sequence is LNFFRYFNEY…QFPNTLLSLT (66 aa). The chain crosses the membrane as a helical span at residues 595–615; that stretch reads LSFIQFVSGSFVAILGILTIF. Topologically, residues 616–629 are lumenal; the sequence is DPDNFLNFEITPDR. The chain crosses the membrane as a helical span at residues 630-650; it reads TVLFYMTVFGTLWAVCHSSIN. Residues 651 to 696 are Cytoplasmic-facing; sequence DEYTVLKPEETLEELVSYTHYAPKEWKGKYHTEDIKNEFCRLYNLR. The stretch at 697–717 is an intramembrane region; the sequence is ITLLLRELVSIIITPFILWFS. Over 718 to 908 the chain is Cytoplasmic; sequence LPKNSERIID…QYYKKSDRNR (191 aa).

It belongs to the ATG9 family. Homotrimer; forms a homotrimer with a central pore that forms a path between the two membrane leaflets. Post-translationally, phosphorylated by ATG1. ATG1 phosphorylation is required for preautophagosome elongation.

The protein resides in the preautophagosomal structure membrane. It localises to the cytoplasmic vesicle membrane. It is found in the golgi apparatus membrane. Its subcellular location is the endoplasmic reticulum membrane. It catalyses the reaction a 1,2-diacyl-sn-glycero-3-phosphocholine(in) = a 1,2-diacyl-sn-glycero-3-phosphocholine(out). The enzyme catalyses a 1,2-diacyl-sn-glycero-3-phospho-L-serine(in) = a 1,2-diacyl-sn-glycero-3-phospho-L-serine(out). It carries out the reaction a 1,2-diacyl-sn-glycero-3-phosphoethanolamine(in) = a 1,2-diacyl-sn-glycero-3-phosphoethanolamine(out). The catalysed reaction is a 1,2-diacyl-sn-glycero-3-phospho-(1D-myo-inositol-3-phosphate)(in) = a 1,2-diacyl-sn-glycero-3-phospho-(1D-myo-inositol-3-phosphate)(out). Phospholipid scramblase involved in autophagy and cytoplasm to vacuole transport (Cvt) vesicle formation. Cycles between the preautophagosomal structure/phagophore assembly site (PAS) and the cytoplasmic vesicle pool and supplies membrane for the growing autophagosome. Lipid scramblase activity plays a key role in preautophagosomal structure/phagophore assembly by distributing the phospholipids that arrive through ATG2 from the cytoplasmic to the luminal leaflet of the bilayer, thereby driving autophagosomal membrane expansion. Required for mitophagy. Also involved in endoplasmic reticulum-specific autophagic process and is essential for the survival of cells subjected to severe ER stress. Different machineries are required for anterograde trafficking to the PAS during either the Cvt pathway or bulk autophagy and for retrograde trafficking. In Kluyveromyces lactis (strain ATCC 8585 / CBS 2359 / DSM 70799 / NBRC 1267 / NRRL Y-1140 / WM37) (Yeast), this protein is Autophagy-related protein 9 (ATG9).